Reading from the N-terminus, the 499-residue chain is MSNSNDNIWNNTEELNELLRIRREKLNILRSMGIEPYGIDRFERTNLSSDIKNDYENFEGKVVTLAGRIMSKRSHGKASFADIQDRDGRIQIYVKYDTVGEKNYEIFKILDIGDIIGVTGEVFKSKTGEITIRVTDFKLLSKSLQILPEKWHGLKDPDLRYRQRYTDLIINPEVKEVFLKRTKIIKAIREFLDNRGFLEVETPILHTIAGGAAARPFITHHNALDIDMYLRIALELHLKRLIVGGLEKVYEMGRVFRNEGMDIRHNPEFTLLELYEAYTDYYGMMELTEQLFAYVAQKVNGITKIVYQGTEIDLTPPWKRITMVDAIKEYVGVDFNEVKTDEEAIEIAKKLNLETKEGMKKGEVIALVFDELVEQHLIQPTFVMDYPVEISPLAKRKHDNPAFTSRFEAFIYGREVANAFSELNDPIDQKERFLEQLKQREAGDEEAHMMDEDFINALEVGMPPTGGLGIGVDRLVMFMTDAYSIRDVILFPTMKPKND.

Residues E408 and E415 each contribute to the Mg(2+) site.

Belongs to the class-II aminoacyl-tRNA synthetase family. In terms of assembly, homodimer. The cofactor is Mg(2+).

Its subcellular location is the cytoplasm. The catalysed reaction is tRNA(Lys) + L-lysine + ATP = L-lysyl-tRNA(Lys) + AMP + diphosphate. This Thermoanaerobacter pseudethanolicus (strain ATCC 33223 / 39E) (Clostridium thermohydrosulfuricum) protein is Lysine--tRNA ligase.